A 538-amino-acid chain; its full sequence is Cytochrome P450 52A4 (538 aa).

Residues 27-46 (WYILIPTILLTLNFLSILHT) form a helical membrane-spanning segment. Residue Cys485 participates in heme binding.

The protein belongs to the cytochrome P450 family. It depends on heme as a cofactor.

Its subcellular location is the membrane. In terms of biological role, together with an NADPH cytochrome P450 the enzyme system catalyzes the terminal hydroxylation as the first step in the assimilation of alkanes and fatty acids. The protein is Cytochrome P450 52A4 (CYP52A4) of Candida maltosa (Yeast).